Reading from the N-terminus, the 167-residue chain is NADH-quinone oxidoreductase subunit I 1 (167 aa).

4Fe-4S ferredoxin-type domains are found at residues 52 to 82 and 98 to 127; these read LQRDVNGMEKCVACFLCAAACPSNCIYIEAA and KVYNIDYNRCIFCGYCVEACPTDAITHGHG. [4Fe-4S] cluster-binding residues include Cys-62, Cys-65, Cys-68, Cys-72, Cys-107, Cys-110, Cys-113, and Cys-117. The interval 148-167 is disordered; sequence PVPPGAKPPSMADEVPAGAH.

This sequence belongs to the complex I 23 kDa subunit family. As to quaternary structure, NDH-1 is composed of 14 different subunits. Subunits NuoA, H, J, K, L, M, N constitute the membrane sector of the complex. [4Fe-4S] cluster is required as a cofactor.

It is found in the cell inner membrane. It catalyses the reaction a quinone + NADH + 5 H(+)(in) = a quinol + NAD(+) + 4 H(+)(out). Functionally, NDH-1 shuttles electrons from NADH, via FMN and iron-sulfur (Fe-S) centers, to quinones in the respiratory chain. The immediate electron acceptor for the enzyme in this species is believed to be ubiquinone. Couples the redox reaction to proton translocation (for every two electrons transferred, four hydrogen ions are translocated across the cytoplasmic membrane), and thus conserves the redox energy in a proton gradient. This chain is NADH-quinone oxidoreductase subunit I 1, found in Solibacter usitatus (strain Ellin6076).